The following is a 925-amino-acid chain: Translation initiation factor IF-2 (925 aa).

The disordered stretch occupies residues 190–329 (PAAPTSEAAP…RRRDEREAAV (140 aa)). Pro residues-rich tracts occupy residues 199 to 209 (PPEPEPTPLPA), 217 to 238 (PVRP…PAPR), and 279 to 288 (RPVPAQPAPQ). Low complexity predominate over residues 289–307 (TPTRSGSGIAKKGAITKAG). Over residues 320–329 (RRRDEREAAV) the composition is skewed to basic and acidic residues. Residues 417–589 (VRPPVVTIMG…LLLVADYELE (173 aa)) enclose the tr-type G domain. Residues 426-433 (GHVDHGKT) are G1. A GTP-binding site is contributed by 426 to 433 (GHVDHGKT). The interval 451–455 (GITQH) is G2. Positions 476–479 (DTPG) are G3. Residues 476-480 (DTPGH) and 530-533 (NKVD) each bind GTP. The segment at 530 to 533 (NKVD) is G4. The interval 566–568 (SAK) is G5.

It belongs to the TRAFAC class translation factor GTPase superfamily. Classic translation factor GTPase family. IF-2 subfamily.

The protein localises to the cytoplasm. In terms of biological role, one of the essential components for the initiation of protein synthesis. Protects formylmethionyl-tRNA from spontaneous hydrolysis and promotes its binding to the 30S ribosomal subunits. Also involved in the hydrolysis of GTP during the formation of the 70S ribosomal complex. The sequence is that of Translation initiation factor IF-2 from Gloeobacter violaceus (strain ATCC 29082 / PCC 7421).